A 187-amino-acid chain; its full sequence is Large ribosomal subunit protein uL13 (187 aa).

Belongs to the universal ribosomal protein uL13 family.

The polypeptide is Large ribosomal subunit protein uL13 (rpl13a) (Dictyostelium discoideum (Social amoeba)).